We begin with the raw amino-acid sequence, 860 residues long: Leucine-rich repeat and death domain-containing protein 1 (860 aa).

The segment at 1–103 (MSEKEGMSEV…TGTSQSLSSL (103 aa)) is disordered. Positions 50–72 (KSSNQIYETHPRQNTLESTSSSG) are enriched in polar residues. Low complexity predominate over residues 90-103 (TSTRTGTSQSLSSL). LRR repeat units follow at residues 139 to 163 (LGADNFTVNLEAKGLQEFPKDILKI), 164 to 186 (KYVKYLYLDKNQIKTFQGADSGD), 187 to 210 (LLGLEILSLQENGLSSLPSEIQLL), 211 to 233 (HNLRILNVSHNHISHIPKEISQL), 235 to 256 (NIRQLFFYNNYIENFPSDLECL), 257 to 279 (GNLEILSLGKNKLRHIPDTLPSL), 281 to 302 (TLRVLNLEYNQLTTFPKALCFL), 303 to 325 (PKLISLDLTGNLISSLPKEIREL), 326 to 348 (KNLETLLMDHNKLTFLAVEIFQL), 350 to 371 (KIKELQLADNKLEVISHKIENF), 372 to 394 (RELRILILDKNLLKNIPEKISCC), 396 to 417 (MLECLSLSDNKLTELPKYIHKL), 419 to 440 (NLRKLHVNRNNMVKITDCISHL), 441 to 463 (NNICSLEFSGNIITDVPIEIKNC), 465 to 486 (KIIKIELSYNKIMYFPLGLCAL), 487 to 510 (DSLYYLSVNGNYISEIPVDISFSK), 512 to 532 (LLHLELSENKLLIFSEHFCSL), 533 to 555 (INLKYLDLGKNQIKKIPASISNM), 557 to 578 (SLHVLILCCNKFETFPRELCTL), 579 to 601 (ENLQVLDLSENQLQKISSDICNL), 603 to 624 (GIQKLNFSSNQFIHFPIELCQL), 627 to 650 (LEQLNISQIKGRKLTRLPGELSNM), 651 to 673 (TQLKELDISNNAIREIPRNIGEL), 675 to 696 (NLVSLHAYNNQISYLPPSLLSL), 697 to 719 (NDLQQLNLSGNNLTALPSAIYNI), and 721 to 742 (SLKEINFDDNPLLRPPVEICKG). The Death domain maps to 764 to 852 (EKIFKIVANN…EIMDKITALN (89 aa)). The stretch at 856 to 860 (RAIKF) is one LRR 27 repeat.

The polypeptide is Leucine-rich repeat and death domain-containing protein 1 (LRRD1) (Homo sapiens (Human)).